We begin with the raw amino-acid sequence, 107 residues long: Large ribosomal subunit protein P1 (107 aa).

Residues 67–107 (GAAPAAAAPAAGGAPAAGAAPKKEEKKEPSEEEDMGFSLFD) are disordered. Residues 69-86 (APAAAAPAAGGAPAAGAA) show a composition bias toward low complexity.

This sequence belongs to the eukaryotic ribosomal protein P1/P2 family. In terms of assembly, P1 and P2 exist as dimers at the large ribosomal subunit.

Plays an important role in the elongation step of protein synthesis. The chain is Large ribosomal subunit protein P1 from Chlamydomonas reinhardtii (Chlamydomonas smithii).